A 118-amino-acid polypeptide reads, in one-letter code: 5-hydroxyisourate hydrolase (118 aa).

Histidine 11, arginine 51, and tyrosine 115 together coordinate substrate.

This sequence belongs to the transthyretin family. 5-hydroxyisourate hydrolase subfamily. Homotetramer.

Its subcellular location is the peroxisome. The catalysed reaction is 5-hydroxyisourate + H2O = 5-hydroxy-2-oxo-4-ureido-2,5-dihydro-1H-imidazole-5-carboxylate + H(+). Its pathway is purine metabolism; urate degradation; (S)-allantoin from urate: step 2/3. Catalyzes the hydrolysis of 5-hydroxyisourate (HIU) to 2-oxo-4-hydroxy-4-carboxy-5-ureidoimidazoline (OHCU). The protein is 5-hydroxyisourate hydrolase (Urah) of Mus musculus (Mouse).